Consider the following 141-residue polypeptide: Hemoglobin subunit alpha (141 aa).

The region spanning 1 to 141 (VLSSADKTNI…VSTVLTSKYR (141 aa)) is the Globin domain. Residue Ser3 is modified to Phosphoserine. Lys7 carries the post-translational modification N6-succinyllysine. Position 8 is a phosphothreonine (Thr8). Lys11 bears the N6-succinyllysine mark. At Lys16 the chain carries N6-acetyllysine; alternate. Lys16 carries the post-translational modification N6-succinyllysine; alternate. Tyr24 carries the post-translational modification Phosphotyrosine. At Ser35 the chain carries Phosphoserine. Lys40 is subject to N6-succinyllysine. At Ser49 the chain carries Phosphoserine. Residue His58 coordinates O2. His87 provides a ligand contact to heme b. Ser102 carries the phosphoserine modification. Thr108 is subject to Phosphothreonine. Phosphoserine occurs at positions 124 and 131. Phosphothreonine is present on residues Thr134 and Thr137. At Ser138 the chain carries Phosphoserine.

Belongs to the globin family. In terms of assembly, heterotetramer of two alpha chains and two beta chains. As to expression, red blood cells.

Involved in oxygen transport from the lung to the various peripheral tissues. In terms of biological role, hemopressin acts as an antagonist peptide of the cannabinoid receptor CNR1. Hemopressin-binding efficiently blocks cannabinoid receptor CNR1 and subsequent signaling. This is Hemoglobin subunit alpha (HBA) from Rousettus aegyptiacus (Egyptian fruit bat).